Here is a 309-residue protein sequence, read N- to C-terminus: Ribonuclease Z (309 aa).

His-63, His-65, Asp-67, His-68, His-145, Asp-216, and His-274 together coordinate Zn(2+). The active-site Proton acceptor is Asp-67.

This sequence belongs to the RNase Z family. As to quaternary structure, homodimer. Zn(2+) serves as cofactor.

The enzyme catalyses Endonucleolytic cleavage of RNA, removing extra 3' nucleotides from tRNA precursor, generating 3' termini of tRNAs. A 3'-hydroxy group is left at the tRNA terminus and a 5'-phosphoryl group is left at the trailer molecule.. Functionally, zinc phosphodiesterase, which displays some tRNA 3'-processing endonuclease activity. Probably involved in tRNA maturation, by removing a 3'-trailer from precursor tRNA. The protein is Ribonuclease Z of Streptococcus gordonii (strain Challis / ATCC 35105 / BCRC 15272 / CH1 / DL1 / V288).